The following is a 453-amino-acid chain: Ribulose bisphosphate carboxylase large chain (453 aa).

A propeptide spanning residues 1-2 (MS) is cleaved from the precursor. Pro3 carries the N-acetylproline modification. An N6,N6,N6-trimethyllysine modification is found at Lys14. The substrate site is built by Asn123 and Thr173. Lys175 serves as the catalytic Proton acceptor. Lys177 contacts substrate. Residues Lys201, Asp203, and Glu204 each coordinate Mg(2+). Lys201 is modified (N6-carboxylysine). Catalysis depends on His294, which acts as the Proton acceptor. Substrate-binding residues include Arg295, His327, and Ser379.

The protein belongs to the RuBisCO large chain family. Type I subfamily. In terms of assembly, heterohexadecamer of 8 large chains and 8 small chains; disulfide-linked. The disulfide link is formed within the large subunit homodimers. Mg(2+) serves as cofactor. The disulfide bond which can form in the large chain dimeric partners within the hexadecamer appears to be associated with oxidative stress and protein turnover.

It localises to the plastid. The protein localises to the chloroplast. The enzyme catalyses 2 (2R)-3-phosphoglycerate + 2 H(+) = D-ribulose 1,5-bisphosphate + CO2 + H2O. It carries out the reaction D-ribulose 1,5-bisphosphate + O2 = 2-phosphoglycolate + (2R)-3-phosphoglycerate + 2 H(+). Functionally, ruBisCO catalyzes two reactions: the carboxylation of D-ribulose 1,5-bisphosphate, the primary event in carbon dioxide fixation, as well as the oxidative fragmentation of the pentose substrate in the photorespiration process. Both reactions occur simultaneously and in competition at the same active site. This chain is Ribulose bisphosphate carboxylase large chain, found in Phuopsis stylosa (Caucasian crosswort).